We begin with the raw amino-acid sequence, 366 residues long: tRNA/tmRNA (uracil-C(5))-methyltransferase (366 aa).

Residues Gln189, Tyr217, Asn222, Glu238, and Asp298 each coordinate S-adenosyl-L-methionine. Cys323 serves as the catalytic Nucleophile. The active-site Proton acceptor is the Glu357.

Belongs to the class I-like SAM-binding methyltransferase superfamily. RNA M5U methyltransferase family. TrmA subfamily.

It catalyses the reaction uridine(54) in tRNA + S-adenosyl-L-methionine = 5-methyluridine(54) in tRNA + S-adenosyl-L-homocysteine + H(+). It carries out the reaction uridine(341) in tmRNA + S-adenosyl-L-methionine = 5-methyluridine(341) in tmRNA + S-adenosyl-L-homocysteine + H(+). Its function is as follows. Dual-specificity methyltransferase that catalyzes the formation of 5-methyluridine at position 54 (m5U54) in all tRNAs, and that of position 341 (m5U341) in tmRNA (transfer-mRNA). The polypeptide is tRNA/tmRNA (uracil-C(5))-methyltransferase (Photorhabdus laumondii subsp. laumondii (strain DSM 15139 / CIP 105565 / TT01) (Photorhabdus luminescens subsp. laumondii)).